A 393-amino-acid chain; its full sequence is Phosphatidate cytidylyltransferase (393 aa).

Helical transmembrane passes span 49–69 (NFFR…WISV), 73–93 (IYSF…IIGI), 108–128 (IILG…IMMM), 141–161 (LSFV…ASLR), 171–191 (LFAL…CAIF), 198–218 (FWFV…YVVG), 237–257 (GFIG…HLHV), and 290–310 (IHII…GFLA).

The protein belongs to the CDS family.

Its subcellular location is the membrane. It carries out the reaction a 1,2-diacyl-sn-glycero-3-phosphate + CTP + H(+) = a CDP-1,2-diacyl-sn-glycerol + diphosphate. The protein operates within phospholipid metabolism; CDP-diacylglycerol biosynthesis; CDP-diacylglycerol from sn-glycerol 3-phosphate: step 3/3. This is Phosphatidate cytidylyltransferase (CDS1) from Encephalitozoon cuniculi (strain GB-M1) (Microsporidian parasite).